Here is a 610-residue protein sequence, read N- to C-terminus: Polyadenylation factor subunit 2 (610 aa).

The tract at residues 1–29 is disordered; sequence MAFYDDSGADSQPFGRPQKPYEGGIVGPR. 7 WD repeats span residues 96 to 135, 142 to 182, 184 to 223, 226 to 265, 268 to 308, 311 to 351, and 381 to 420; these read KSKK…FETV, QLQA…ETID, AHHD…ADTV, GHNW…CLTT, SHKN…DICI, GHEK…VPSG, and AHSA…ETSY. Disordered regions lie at residues 480 to 519 and 574 to 610; these read PPGG…PQMD and GIPL…PYGR. Positions 601-610 are enriched in polar residues; the sequence is SNTPDNPYGR.

The protein localises to the nucleus. Its function is as follows. Required for 3'-end cleavage and polyadenylation of pre-mRNAs. Also involved in chromosome segregation where it has a role in chromosome attachment to the mitotic spindle. This Aspergillus oryzae (strain ATCC 42149 / RIB 40) (Yellow koji mold) protein is Polyadenylation factor subunit 2 (pfs2).